We begin with the raw amino-acid sequence, 159 residues long: Small heat shock protein hspM (159 aa).

In terms of domain architecture, sHSP spans 1–159 (MFVLNFELAG…LSNNIKIQIN (159 aa)). Residues 35–101 (MNNNNKNNLQ…NNNNKSSKTN (67 aa)) form a disordered region. 2 stretches are compositionally biased toward low complexity: residues 36–46 (NNNNKNNLQIN) and 61–95 (SSSSNNNNNNNNNNNNNNNNNNNNNNNNNSNNNNN).

This sequence belongs to the small heat shock protein (HSP20) family.

The protein is Small heat shock protein hspM (hspM) of Dictyostelium discoideum (Social amoeba).